Reading from the N-terminus, the 105-residue chain is U21-theraphotoxin-Cg1a 4 (105 aa).

The signal sequence occupies residues Met1–Ala21. Positions Glu22–Glu48 are excised as a propeptide. Disulfide bonds link Cys49–Cys63, Cys56–Cys68, and Cys62–Cys76. A Valine amide modification is found at Val82. Residues Gly83–Val105 constitute a propeptide that is removed on maturation.

It belongs to the neurotoxin 10 (Hwtx-1) family. 05 (F4a) subfamily. As to expression, expressed by the venom gland.

It localises to the secreted. Its function is as follows. Probable ion channel inhibitor. The chain is U21-theraphotoxin-Cg1a 4 from Chilobrachys guangxiensis (Chinese earth tiger tarantula).